Reading from the N-terminus, the 224-residue chain is Ribonuclease 3 (224 aa).

Residues 4–127 form the RNase III domain; sequence IEKLEQSLTY…IIGAIHLEAG (124 aa). E40 is a binding site for Mg(2+). D44 is an active-site residue. Mg(2+) is bound by residues D113 and E116. The active site involves E116. In terms of domain architecture, DRBM spans 154-223; that stretch reads DYKTKLQEIT…AKIALEKLGA (70 aa).

It belongs to the ribonuclease III family. In terms of assembly, homodimer. Mg(2+) is required as a cofactor.

It is found in the cytoplasm. It carries out the reaction Endonucleolytic cleavage to 5'-phosphomonoester.. Functionally, digests double-stranded RNA. Involved in the processing of primary rRNA transcript to yield the immediate precursors to the large and small rRNAs (23S and 16S). Processes some mRNAs, and tRNAs when they are encoded in the rRNA operon. Processes pre-crRNA and tracrRNA of type II CRISPR loci if present in the organism. This Campylobacter jejuni subsp. jejuni serotype O:6 (strain 81116 / NCTC 11828) protein is Ribonuclease 3.